We begin with the raw amino-acid sequence, 482 residues long: E3 ubiquitin-protein ligase makorin-1 (482 aa).

The segment covering 26-38 has biased composition (low complexity); the sequence is ASPTPIPTVTAPS. Residues 26-52 are disordered; it reads ASPTPIPTVTAPSLGAGGGGGGSDGSG. The segment covering 40 to 52 has biased composition (gly residues); the sequence is GAGGGGGGSDGSG. 3 consecutive C3H1-type zinc fingers follow at residues 55–82, 84–111, and 208–235; these read WTKQ…HDLS, SPYS…HSKP, and ETKK…HGDS. The makorin-type Cys-His stretch occupies residues 236 to 263; sequence CDMCGLQVLHPMDAAQRSQHIKSCIEAH. The segment at 281-335 adopts an RING-type zinc-finger fold; the sequence is CGICMEVVYEKANPSERRFGILSNCNHTYCLKCIRKWRSAKQFESKIIKSCPECR. The segment at 364-393 adopts a C3H1-type 4 zinc-finger fold; sequence AMSNKACRYFDEGRGSCPFGGNCFYKHAYP.

As to quaternary structure, interacts with p53/TP53 and CDKN1A. Interacts with TERT, modulating telomere length homeostasis. Auto-ubiquitinated; which leads to proteasomal degradation. Ubiquitous.

The enzyme catalyses S-ubiquitinyl-[E2 ubiquitin-conjugating enzyme]-L-cysteine + [acceptor protein]-L-lysine = [E2 ubiquitin-conjugating enzyme]-L-cysteine + N(6)-ubiquitinyl-[acceptor protein]-L-lysine.. It participates in protein modification; protein ubiquitination. E3 ubiquitin ligase catalyzing the covalent attachment of ubiquitin moieties onto substrate proteins. These substrates include FILIP1, p53/TP53, CDKN1A and TERT. Keeps cells alive by suppressing p53/TP53 under normal conditions, but stimulates apoptosis by repressing CDKN1A under stress conditions. Acts as a negative regulator of telomerase. Has negative and positive effects on RNA polymerase II-dependent transcription. The sequence is that of E3 ubiquitin-protein ligase makorin-1 (MKRN1) from Homo sapiens (Human).